A 529-amino-acid polypeptide reads, in one-letter code: Aldehyde dehydrogenase 1 (529 aa).

Gly-251 to Gly-256 contributes to the NAD(+) binding site. Catalysis depends on residues Glu-273 and Cys-307.

Belongs to the aldehyde dehydrogenase family.

It catalyses the reaction an aldehyde + NAD(+) + H2O = a carboxylate + NADH + 2 H(+). The chain is Aldehyde dehydrogenase 1 from Entamoeba histolytica (strain ATCC 30459 / HM-1:IMSS / ABRM).